The primary structure comprises 279 residues: HTH-type transcriptional regulator HdfR (279 aa).

Positions 1-58 (MDTELLKTFLEVSRTRHFGRAAESLYLTQSAVSFRIRQLENQLGVNLFTRHRNNIRLT) constitute an HTH lysR-type domain. The H-T-H motif DNA-binding region spans 18–37 (FGRAAESLYLTQSAVSFRIR).

Belongs to the LysR transcriptional regulatory family.

In terms of biological role, negatively regulates the transcription of the flagellar master operon flhDC by binding to the upstream region of the operon. This chain is HTH-type transcriptional regulator HdfR, found in Shigella boydii serotype 18 (strain CDC 3083-94 / BS512).